A 415-amino-acid chain; its full sequence is Gamma-glutamyl phosphate reductase (415 aa).

This sequence belongs to the gamma-glutamyl phosphate reductase family.

The protein resides in the cytoplasm. The catalysed reaction is L-glutamate 5-semialdehyde + phosphate + NADP(+) = L-glutamyl 5-phosphate + NADPH + H(+). It participates in amino-acid biosynthesis; L-proline biosynthesis; L-glutamate 5-semialdehyde from L-glutamate: step 2/2. Functionally, catalyzes the NADPH-dependent reduction of L-glutamate 5-phosphate into L-glutamate 5-semialdehyde and phosphate. The product spontaneously undergoes cyclization to form 1-pyrroline-5-carboxylate. This Bacteroides fragilis (strain YCH46) protein is Gamma-glutamyl phosphate reductase.